The primary structure comprises 1843 residues: Proteasome activator complex subunit 4 (1843 aa).

Positions 1–11 are enriched in low complexity; that stretch reads MEPAERAGVGE. A disordered region spans residues 1-25; sequence MEPAERAGVGEPPEPGGRPEPGPRG. Pro residues predominate over residues 12-22; sequence PPEPGGRPEPG. 2 HEAT repeats span residues 475–519 and 998–1037; these read PEGP…LVDC and NFCC…NHSG. Residue S1121 is modified to Phosphoserine. HEAT repeat units follow at residues 1179 to 1217 and 1354 to 1392; these read RVLP…QLKR and DAFL…GSKH. S1614 is subject to Phosphoserine. 2 HEAT repeats span residues 1636–1674 and 1680–1718; these read PHQV…YNLF and EDAV…CNFL. The interval 1650–1738 is bromodomain-like (BRDL); sequence ARSSSWHARY…EQLCKTKLPK (89 aa). S1746 is modified (phosphoserine).

This sequence belongs to the BLM10 family. In terms of assembly, homodimer. Interacts with the 20S and 26S proteasomes. Component of the spermatoproteasome, a form of the proteasome specifically found in testis.

It is found in the cytoplasm. The protein localises to the cytosol. It localises to the nucleus. The protein resides in the nucleus speckle. Its function is as follows. Associated component of the proteasome that specifically recognizes acetylated histones and promotes ATP- and ubiquitin-independent degradation of core histones during spermatogenesis and DNA damage response. Recognizes and binds acetylated histones via its bromodomain-like (BRDL) region and activates the proteasome by opening the gated channel for substrate entry. Binds to the core proteasome via its C-terminus, which occupies the same binding sites as the proteasomal ATPases, opening the closed structure of the proteasome via an active gating mechanism. Component of the spermatoproteasome, a form of the proteasome specifically found in testis: binds to acetylated histones and promotes degradation of histones, thereby participating actively to the exchange of histones during spermatogenesis. Also involved in DNA damage response in somatic cells, by promoting degradation of histones following DNA double-strand breaks. The sequence is that of Proteasome activator complex subunit 4 from Homo sapiens (Human).